We begin with the raw amino-acid sequence, 416 residues long: MLSAADFDPKPRRASVAVDVGGVIVGGGAPIVVQSMTNTDTADIDSTVAQVAALHRAGSELVRITVDRDESAAAVPKIRERLLRLGMDVPLIGDFHYIGHKLLADHPACAEALAKYRINPGNVGFKDKKDKQFAEIIEMAIRYDKPVRIGVNWGSLDQDLLTALMDENAAAGSPLSARQVTREAIVQSALLSAALAEEIGLPRNRIILSAKVSQVQDLIAVNSMLAERSNHALHLGLTEAGMGSKGIVASSAAMGFVLQHGIGDTIRVSLTPEPNGDRTREVQVAQEILQVMGFRQFVPVVAACPGCGRTTSTVFQELAQNIQNDIRKNMPVWREKYPGVEALNVAVMGCIVNGPGESKHADIGISLPGTGETPAAPVFIDGKKALTLRGPNIAADFEALVVDYIEKRFGRQTAAE.

[4Fe-4S] cluster contacts are provided by Cys-304, Cys-307, Cys-350, and Glu-357.

The protein belongs to the IspG family. The cofactor is [4Fe-4S] cluster.

The enzyme catalyses (2E)-4-hydroxy-3-methylbut-2-enyl diphosphate + oxidized [flavodoxin] + H2O + 2 H(+) = 2-C-methyl-D-erythritol 2,4-cyclic diphosphate + reduced [flavodoxin]. The protein operates within isoprenoid biosynthesis; isopentenyl diphosphate biosynthesis via DXP pathway; isopentenyl diphosphate from 1-deoxy-D-xylulose 5-phosphate: step 5/6. In terms of biological role, converts 2C-methyl-D-erythritol 2,4-cyclodiphosphate (ME-2,4cPP) into 1-hydroxy-2-methyl-2-(E)-butenyl 4-diphosphate. The chain is 4-hydroxy-3-methylbut-2-en-1-yl diphosphate synthase (flavodoxin) from Rhizobium etli (strain ATCC 51251 / DSM 11541 / JCM 21823 / NBRC 15573 / CFN 42).